The sequence spans 708 residues: Glutamate--tRNA ligase, cytoplasmic (708 aa).

Interaction with ARC1 regions lie at residues 106–115 (NLRTFILGGL) and 141–157 (KVDV…EMDP). Residue 205 to 207 (RFP) participates in L-glutamate binding. The short motif at 210–219 (PSGYLHIGHA) is the 'HIGH' region element. An ATP-binding site is contributed by histidine 215. Aspartate 241 is a binding site for L-glutamate. A Phosphothreonine modification is found at threonine 300. L-glutamate contacts are provided by residues 382 to 386 (YDFCV) and arginine 400. Residues glutamate 403 and 437–441 (LLSKR) contribute to the ATP site. Positions 437–441 (LLSKR) match the 'KMSKS' region motif.

It belongs to the class-I aminoacyl-tRNA synthetase family. Glutamate--tRNA ligase type 2 subfamily. As to quaternary structure, component of a yeast aminoacyl-tRNA synthase (aaRS) complex formed by methionyl-tRNA synthase MES1, glutamyl-tRNA synthase GUS1 and the tRNA aminoacylation cofactor ARC1 in a stoichiometric complex. Interacts (via N-ter) with ARC1 (via N-ter). Can also form a stable binary complex with ARC1 that is functional in terms of aminoacylation. ARC1 increases the affinity for cognate tRNAs due to the presence of a tRNA binding domain in the middle and C-terminal part of ARC1.

The protein resides in the cytoplasm. It is found in the mitochondrion. It carries out the reaction tRNA(Glu) + L-glutamate + ATP = L-glutamyl-tRNA(Glu) + AMP + diphosphate. Catalyzes the attachment of glutamate to tRNA(Glu) in a two-step reaction: glutamate is first activated by ATP to form Glu-AMP and then transferred to the acceptor end of tRNA(Glu). In mitochondria, constitutes the nondiscriminating glutamyl-tRNA synthase that generates the mitochondrial mischarged glutamyl-tRNA(Gln) substrate for the tRNA-dependent amidotransferase (AdT), which generates mitochondrial glutaminyl-tRNA(Gln) by transamidation of glutamyl-tRNA(Gln). The polypeptide is Glutamate--tRNA ligase, cytoplasmic (GUS1) (Saccharomyces cerevisiae (strain ATCC 204508 / S288c) (Baker's yeast)).